Reading from the N-terminus, the 91-residue chain is Acylphosphatase (91 aa).

One can recognise an Acylphosphatase-like domain in the interval 6-91 (CMRCYISGRV…WEDYISFDVL (86 aa)). Catalysis depends on residues arginine 21 and asparagine 39.

Belongs to the acylphosphatase family.

The enzyme catalyses an acyl phosphate + H2O = a carboxylate + phosphate + H(+). In Legionella pneumophila (strain Corby), this protein is Acylphosphatase (acyP).